Consider the following 443-residue polypeptide: Xaa-Pro dipeptidase (443 aa).

The Mn(2+) site is built by D244, D255, H336, E381, and E420.

Belongs to the peptidase M24B family. Bacterial-type prolidase subfamily. The cofactor is Mn(2+).

The enzyme catalyses Xaa-L-Pro dipeptide + H2O = an L-alpha-amino acid + L-proline. Its function is as follows. Splits dipeptides with a prolyl residue in the C-terminal position. This is Xaa-Pro dipeptidase from Stenotrophomonas maltophilia (strain K279a).